A 160-amino-acid polypeptide reads, in one-letter code: Probable NADH dehydrogenase [ubiquinone] 1 beta subcomplex subunit 2, mitochondrial (160 aa).

Belongs to the complex I NDUFB2 subunit family. As to quaternary structure, complex I is composed of 45 different subunits.

It localises to the mitochondrion inner membrane. Accessory subunit of the mitochondrial membrane respiratory chain NADH dehydrogenase (Complex I), that is believed not to be involved in catalysis. Complex I functions in the transfer of electrons from NADH to the respiratory chain. The immediate electron acceptor for the enzyme is believed to be ubiquinone. In Caenorhabditis briggsae, this protein is Probable NADH dehydrogenase [ubiquinone] 1 beta subcomplex subunit 2, mitochondrial.